Here is a 62-residue protein sequence, read N- to C-terminus: Small ribosomal subunit protein eS30z/eS30y/eS30x (62 aa).

The disordered stretch occupies residues 1–38 (MGKVHGSLARAGKVRGQTPKVAKQDKKKKPRGRAHKRL). The span at 25 to 38 (DKKKKPRGRAHKRL) shows a compositional bias: basic residues.

This sequence belongs to the eukaryotic ribosomal protein eS30 family.

This is Small ribosomal subunit protein eS30z/eS30y/eS30x (RPS30A) from Arabidopsis thaliana (Mouse-ear cress).